The primary structure comprises 146 residues: Histone H2B (146 aa).

Residues 1-16 show a composition bias toward basic and acidic residues; the sequence is MAPRADKKPAEKKPGA. Residues 1-52 are disordered; that stretch reads MAPRADKKPAEKKPGAEKTPVAEKAPAEKKPRAGKKLPRDAGAAGDKKKKRA. 3 positions are modified to N6-acetyllysine: lysine 7, lysine 35, and lysine 36. Lysine 142 is covalently cross-linked (Glycyl lysine isopeptide (Lys-Gly) (interchain with G-Cter in ubiquitin)).

Belongs to the histone H2B family. The nucleosome is a histone octamer containing two molecules each of H2A, H2B, H3 and H4 assembled in one H3-H4 heterotetramer and two H2A-H2B heterodimers. The octamer wraps approximately 147 bp of DNA. Can be acetylated to form H2BK6ac, H2BK33ac and H2BK34ac. Post-translationally, monoubiquitinated to form H2BK143ub1; may give a specific tag for epigenetic transcriptional activation.

It is found in the nucleus. The protein resides in the chromosome. In terms of biological role, core component of nucleosome. Nucleosomes wrap and compact DNA into chromatin, limiting DNA accessibility to the cellular machineries which require DNA as a template. Histones thereby play a central role in transcription regulation, DNA repair, DNA replication and chromosomal stability. DNA accessibility is regulated via a complex set of post-translational modifications of histones, also called histone code, and nucleosome remodeling. This chain is Histone H2B (HIS2B), found in Nicotiana tabacum (Common tobacco).